A 595-amino-acid polypeptide reads, in one-letter code: DNA polymerase (595 aa).

The 3'-5' exonuclease domain maps to 1 to 212 (MIELRHEVQG…CKSLTPLVPD (212 aa)). The interval 213–595 (VSRSLVPYEH…SWGSLYGADY (383 aa)) is polymerase.

The protein belongs to the DNA polymerase type-A family.

The catalysed reaction is DNA(n) + a 2'-deoxyribonucleoside 5'-triphosphate = DNA(n+1) + diphosphate. In terms of biological role, replicates viral genomic DNA. This polymerase possesses two enzymatic activities: DNA synthesis (polymerase) and an exonucleolytic activity that degrades single-stranded DNA in the 3'-5' direction. This chain is DNA polymerase (44), found in Mycobacterium phage L5 (Mycobacteriophage L5).